The chain runs to 563 residues: Eukaryotic translation initiation factor 3 subunit D-1 (563 aa).

The interval 98–136 (VQKPPHQRGRFRNMRGRGGRGRNPRGGLNNHHHHGMTTL) is disordered. Residues 100–120 (KPPHQRGRFRNMRGRGGRGRN) are compositionally biased toward basic residues. The segment at 291–305 (EFDLLTVNESSVEPP) is RNA gate.

It belongs to the eIF-3 subunit D family. Component of the eukaryotic translation initiation factor 3 (eIF-3) complex. The eIF-3 complex interacts with pix.

Its subcellular location is the cytoplasm. Its function is as follows. mRNA cap-binding component of the eukaryotic translation initiation factor 3 (eIF-3) complex, which is involved in protein synthesis of a specialized repertoire of mRNAs and, together with other initiation factors, stimulates binding of mRNA and methionyl-tRNAi to the 40S ribosome. The eIF-3 complex specifically targets and initiates translation of a subset of mRNAs involved in cell proliferation. In the eIF-3 complex, eif3d specifically recognizes and binds the 7-methylguanosine cap of a subset of mRNAs. This chain is Eukaryotic translation initiation factor 3 subunit D-1, found in Drosophila pseudoobscura pseudoobscura (Fruit fly).